The chain runs to 349 residues: Small ribosomal subunit biogenesis GTPase RsgA (349 aa).

Residues 1–11 (MSKKKLSKGQQ) show a composition bias toward basic residues. Residues 1–29 (MSKKKLSKGQQRRVSANHQRRLKKTESKV) are disordered. One can recognise a CP-type G domain in the interval 102–272 (HSVLTRPDYY…VIDSPGVREF (171 aa)). GTP contacts are provided by residues 158–161 (NKID) and 212–220 (GQSGVGKSS). 4 residues coordinate Zn(2+): Cys296, Cys301, His303, and Cys309.

It belongs to the TRAFAC class YlqF/YawG GTPase family. RsgA subfamily. In terms of assembly, monomer. Associates with 30S ribosomal subunit, binds 16S rRNA. Zn(2+) serves as cofactor.

The protein localises to the cytoplasm. In terms of biological role, one of several proteins that assist in the late maturation steps of the functional core of the 30S ribosomal subunit. Helps release RbfA from mature subunits. May play a role in the assembly of ribosomal proteins into the subunit. Circularly permuted GTPase that catalyzes slow GTP hydrolysis, GTPase activity is stimulated by the 30S ribosomal subunit. In Pectobacterium atrosepticum (strain SCRI 1043 / ATCC BAA-672) (Erwinia carotovora subsp. atroseptica), this protein is Small ribosomal subunit biogenesis GTPase RsgA.